Reading from the N-terminus, the 341-residue chain is Retinol dehydrogenase 10-B (341 aa).

A helical; Signal-anchor membrane pass occupies residues 3-23 (IVLEFFLVTFRVLWAFVLAAA). Residue 40-64 (LITGAGSGLGRLFALEFARRRAQLV) coordinates NADP(+). A substrate-binding site is contributed by serine 197. Tyrosine 210 acts as the Proton acceptor in catalysis.

Belongs to the short-chain dehydrogenases/reductases (SDR) family.

It localises to the microsome membrane. It is found in the endoplasmic reticulum membrane. The catalysed reaction is all-trans-retinol + NADP(+) = all-trans-retinal + NADPH + H(+). It functions in the pathway cofactor metabolism; retinol metabolism. Retinol dehydrogenase with a clear preference for NADP. Converts all-trans-retinol to all-trans-retinal. Has no detectable activity towards 11-cis-retinol, 9-cis-retinol and 13-cis-retinol. The chain is Retinol dehydrogenase 10-B (rdh10-b) from Xenopus laevis (African clawed frog).